The sequence spans 480 residues: Glycerol-3-phosphate transporter (480 aa).

Topologically, residues 1–36 (MFGPFKPAPHIAELPAEKIDSTYKRLRWQVFAGIFF) are cytoplasmic. The chain crosses the membrane as a helical span at residues 37–57 (GYAAYYFVRANFDLAQPGLIQ). The Periplasmic portion of the chain corresponds to 58–64 (AGLYSKA). A helical transmembrane segment spans residues 65 to 85 (ELGVIGSAAGLAYGLSKFVMA). Over 86 to 94 (GMSDRSNPR) the chain is Cytoplasmic. The chain crosses the membrane as a helical span at residues 95 to 113 (VFLPFGLLLSGLCMTLMGL). Residues 114-121 (FPWATSGI) are Periplasmic-facing. The chain crosses the membrane as a helical span at residues 122–142 (AIMWVMIFLNGWFQGMGWPPC). Residues 143 to 161 (GRTMVHWWSKSERGTIVSI) lie on the Cytoplasmic side of the membrane. A helical membrane pass occupies residues 162–181 (WNTAHNIGGMVPGAMVLLAS). The Periplasmic segment spans residues 182 to 201 (AIFFSTHGIEAQAKDVWQQS). A helical transmembrane segment spans residues 202-219 (LYFPGIAAMIFAIPVYFV). Topologically, residues 220-274 (MRDTPQSCGLPSIEKWRNDYPDDYNEKTYENDLTAKEIFVTYVLKNKLLWYIAIA) are cytoplasmic. The helical transmembrane segment at 275-295 (NVFVYLIRYGVLKWSPVYLSE) threads the bilayer. Topologically, residues 296–300 (VKHFN) are periplasmic. The chain crosses the membrane as a helical span at residues 301–321 (IKGTAWAYTIYELAAVPGTLL). At 322–334 (CGWVSDKVFKGKR) the chain is on the cytoplasmic side. Residues 335–354 (GLTGFIFMILTTAAVVAYWM) form a helical membrane-spanning segment. At 355–359 (NPATP) the chain is on the periplasmic side. Residues 360–396 (EAELANYSAWYENPYQLTDFVLMTLIGFLIYGPVMLI) traverse the membrane as a helical segment. Topologically, residues 397–415 (GLHALELAPKKAAGTAAGF) are cytoplasmic. A helical transmembrane segment spans residues 416–437 (TGLFGYLGGTVSASAVIGWAAQ). Residues 438–442 (HYGWD) lie on the Periplasmic side of the membrane. Residues 443-463 (GGFYVMIGGGVLAVLLLLIVM) form a helical membrane-spanning segment. Topologically, residues 464-479 (VEEGKHKAKLGDTYGT) are cytoplasmic.

This sequence belongs to the major facilitator superfamily. Organophosphate:Pi antiporter (OPA) (TC 2.A.1.4) family.

It localises to the cell inner membrane. Responsible for glycerol-3-phosphate uptake. The polypeptide is Glycerol-3-phosphate transporter (glpT) (Haemophilus influenzae (strain ATCC 51907 / DSM 11121 / KW20 / Rd)).